Here is a 368-residue protein sequence, read N- to C-terminus: Cyanide hydratase (368 aa).

Positions Y6–L285 constitute a CN hydrolase domain. E46 serves as the catalytic Proton acceptor. The active site involves K128. C163 acts as the Nucleophile in catalysis. The interval L341–A368 is disordered.

It belongs to the carbon-nitrogen hydrolase superfamily. Nitrilase family. As to quaternary structure, oligomer of dimers, forming left-handed helical fibers.

It carries out the reaction formamide = hydrogen cyanide + H2O. Functionally, catalyzes the hydration of cyanide to formamide. Degradation of cyanide may be important for plant pathogenic fungi in infection of cyanogenic plants. In Microdochium sorghi (Zonate leaf spot disease fungus), this protein is Cyanide hydratase.